Here is a 711-residue protein sequence, read N- to C-terminus: Polyribonucleotide nucleotidyltransferase (711 aa).

Residues aspartate 486 and aspartate 492 each coordinate Mg(2+). Positions proline 553–isoleucine 612 constitute a KH domain. In terms of domain architecture, S1 motif spans glycine 622–lysine 690. Residues isoleucine 689 to glutamate 711 are disordered. Positions glutamate 694–glutamate 711 are enriched in low complexity.

The protein belongs to the polyribonucleotide nucleotidyltransferase family. Component of the RNA degradosome, which is a multiprotein complex involved in RNA processing and mRNA degradation. The cofactor is Mg(2+).

It localises to the cytoplasm. The catalysed reaction is RNA(n+1) + phosphate = RNA(n) + a ribonucleoside 5'-diphosphate. Functionally, involved in mRNA degradation. Catalyzes the phosphorolysis of single-stranded polyribonucleotides processively in the 3'- to 5'-direction. The sequence is that of Polyribonucleotide nucleotidyltransferase from Escherichia coli O8 (strain IAI1).